The primary structure comprises 52 residues: Phospholamban (52 aa).

M1 is modified (N-acetylmethionine). Over 1–31 the chain is Cytoplasmic; it reads MEKVQYITRSALRRASTLEVNPQARQRLQEL. Phosphoserine; by PKA is present on S16. T17 bears the Phosphothreonine; by CaMK mark. The chain crosses the membrane as a helical span at residues 32–52; it reads FVNFCLILICLLLICIIVMLL.

It belongs to the phospholamban family. As to quaternary structure, homopentamer. Phosphorylated in response to beta-adrenergic stimulation. Phosphorylation by PKA abolishes the inhibition of ATP2A2-mediated calcium uptake. As to expression, heart.

It localises to the endoplasmic reticulum membrane. It is found in the sarcoplasmic reticulum membrane. The protein resides in the mitochondrion membrane. The protein localises to the membrane. Its function is as follows. Reversibly inhibits the activity of ATP2A2/SERCA2 in cardiac sarcoplasmic reticulum by decreasing the apparent affinity of the ATPase for Ca(2+). Binds preferentially to the ATP-bound E1 conformational form of ATP2A2 which predominates at low Ca(2+) concentrations during the diastolic phase of the cardiac cycle. Inhibits ATP2A2 Ca(2+) affinity by disrupting its allosteric activation by ATP. Modulates the contractility of the heart muscle in response to physiological stimuli via its effects on ATP2A2. Modulates calcium re-uptake during muscle relaxation and plays an important role in calcium homeostasis in the heart muscle. The degree of ATP2A2 inhibition depends on the oligomeric state of PLN. ATP2A2 inhibition is alleviated by PLN phosphorylation. This Gallus gallus (Chicken) protein is Phospholamban (PLN).